Consider the following 656-residue polypeptide: Pumilio homology domain family member 6 (656 aa).

Positions 1–107 (MAPLTKKTNG…GGENGNHTEQ (107 aa)) are disordered. The segment covering 13-23 (SAKEVSHSEKK) has biased composition (basic and acidic residues). 3 positions are modified to phosphoserine; by CK2: Ser31, Ser34, and Ser35. Ser34 and Ser35 each carry phosphoserine. Residues 52 to 89 (SDDDDLDDLSTSDSEAEEEADELDISDDSEEHENENEE) show a composition bias toward acidic residues. The segment covering 90-107 (KEGKDKSEGGENGNHTEQ) has biased composition (basic and acidic residues). The PUM-HD domain maps to 133-483 (RLRVKTPPLP…ELLSKFAPMF (351 aa)). Pumilio repeat units lie at residues 155 to 191 (ELSKDCISDLVLKHDASRIVQTLVKYSSKDRREQIVD), 192 to 227 (ALKGKFYVLATSAYGKYLLVKLLHYGSRSSRQTIIN), 228 to 264 (ELHGSLRKLMRHREGAYVVEDLFVLYATHEQRQQMIK), 340 to 376 (ELLHEQFAELVHTPEGSDVACTLVARANAKERKLILK), 377 to 413 (ALKNHAEKLIKNEYGNIVFITILNCVDDTVLVFKTFS), and 415 to 450 (TVKEHLQEFIIDKFGRRPWLYILLGLDGKYFSPIVK).

Belongs to the PUF6 family. Component of the ASH1 mRNP composed of at least PUF6, SHE2, SHE3, SHE1 and the ASH1 mRNA. Interacts with SHE2 and FUN12. In terms of processing, phosphorylation by CK2 relieves translational repression activity.

It localises to the bud tip. It is found in the nucleus. Its subcellular location is the nucleolus. Functionally, RNA-binding protein involved in post-transcriptional regulation. Component of the ASH1 mRNP which transports the ASH1 mRNA to the distal tip of the bud, where the ASH1 protein is translated and targeted to the daughter cell nucleus. Binds to the ASH1 3'-UTR containing the PUF consensus UUGU segment and represses its translation. This silencing of ASH1 mRNA is critical for asymmetric seggregation of ASH1 to the daughter cell nucleus. The chain is Pumilio homology domain family member 6 (PUF6) from Saccharomyces cerevisiae (strain ATCC 204508 / S288c) (Baker's yeast).